A 175-amino-acid chain; its full sequence is Adenine phosphoribosyltransferase (175 aa).

Belongs to the purine/pyrimidine phosphoribosyltransferase family. In terms of assembly, homodimer.

The protein localises to the cytoplasm. It carries out the reaction AMP + diphosphate = 5-phospho-alpha-D-ribose 1-diphosphate + adenine. It participates in purine metabolism; AMP biosynthesis via salvage pathway; AMP from adenine: step 1/1. Its function is as follows. Catalyzes a salvage reaction resulting in the formation of AMP, that is energically less costly than de novo synthesis. This is Adenine phosphoribosyltransferase from Francisella tularensis subsp. tularensis (strain WY96-3418).